A 657-amino-acid chain; its full sequence is Glycogen debranching enzyme (657 aa).

Aspartate 336 functions as the Nucleophile in the catalytic mechanism. Catalysis depends on glutamate 371, which acts as the Proton donor. A disordered region spans residues 460–479 (ANGEENRDGTNNNYSNNHGK).

Belongs to the glycosyl hydrolase 13 family.

It carries out the reaction Hydrolysis of (1-&gt;6)-alpha-D-glucosidic linkages to branches with degrees of polymerization of three or four glucose residues in limit dextrin.. The protein operates within glycan degradation; glycogen degradation. In terms of biological role, removes maltotriose and maltotetraose chains that are attached by 1,6-alpha-linkage to the limit dextrin main chain, generating a debranched limit dextrin. The polypeptide is Glycogen debranching enzyme (Escherichia coli O6:K15:H31 (strain 536 / UPEC)).